We begin with the raw amino-acid sequence, 104 residues long: Urease subunit beta (104 aa).

The protein belongs to the urease beta subunit family. Heterotrimer of UreA (gamma), UreB (beta) and UreC (alpha) subunits. Three heterotrimers associate to form the active enzyme.

The protein resides in the cytoplasm. It catalyses the reaction urea + 2 H2O + H(+) = hydrogencarbonate + 2 NH4(+). It functions in the pathway nitrogen metabolism; urea degradation; CO(2) and NH(3) from urea (urease route): step 1/1. This Rhodopseudomonas palustris (strain BisB18) protein is Urease subunit beta.